The sequence spans 339 residues: Anthranilate phosphoribosyltransferase (339 aa).

5-phospho-alpha-D-ribose 1-diphosphate-binding positions include G79, 82–83 (GD), T87, 89–92 (NVST), 107–115 (KHGNRSVSS), and S119. G79 contacts anthranilate. S91 is a Mg(2+) binding site. N110 is an anthranilate binding site. R165 provides a ligand contact to anthranilate. Mg(2+) is bound by residues D224 and E225.

It belongs to the anthranilate phosphoribosyltransferase family. As to quaternary structure, homodimer. Requires Mg(2+) as cofactor.

It catalyses the reaction N-(5-phospho-beta-D-ribosyl)anthranilate + diphosphate = 5-phospho-alpha-D-ribose 1-diphosphate + anthranilate. The protein operates within amino-acid biosynthesis; L-tryptophan biosynthesis; L-tryptophan from chorismate: step 2/5. In terms of biological role, catalyzes the transfer of the phosphoribosyl group of 5-phosphorylribose-1-pyrophosphate (PRPP) to anthranilate to yield N-(5'-phosphoribosyl)-anthranilate (PRA). The sequence is that of Anthranilate phosphoribosyltransferase from Caldivirga maquilingensis (strain ATCC 700844 / DSM 13496 / JCM 10307 / IC-167).